The primary structure comprises 331 residues: UBX domain-containing protein 2B (331 aa).

2 disordered regions span residues 1–26 (MAEG…SARD) and 40–65 (KCKS…QRFY). An N-acetylalanine modification is found at alanine 2. Position 56 is a phosphoserine (serine 56). Threonine 59 is subject to Phosphothreonine. Serine 66 carries the phosphoserine modification. In terms of domain architecture, SEP spans 141 to 206 (DVQILLKLWS…MEDHQDQEYI (66 aa)). Serine 231, serine 234, and serine 235 each carry phosphoserine. Residues 252–329 (DSVPTTKIQI…DILNTVLLQQ (78 aa)) enclose the UBX domain.

This sequence belongs to the NSFL1C family. As to quaternary structure, interacts with VCP. Does not bind ubiquitin.

Its subcellular location is the nucleus. The protein resides in the cytoplasm. It localises to the cytosol. The protein localises to the endoplasmic reticulum. It is found in the golgi apparatus. Its subcellular location is the cytoskeleton. The protein resides in the microtubule organizing center. It localises to the centrosome. Adapter protein required for Golgi and endoplasmic reticulum biogenesis. Involved in Golgi and endoplasmic reticulum maintenance during interphase and in their reassembly at the end of mitosis. The complex formed with VCP has membrane fusion activity; membrane fusion activity requires USO1-GOLGA2 tethering and BET1L. VCPIP1 is also required, but not its deubiquitinating activity. Together with NSFL1C/p47, regulates the centrosomal levels of kinase AURKA/Aurora A during mitotic progression by promoting AURKA removal from centrosomes in prophase. Also, regulates spindle orientation during mitosis. The chain is UBX domain-containing protein 2B (UBXN2B) from Homo sapiens (Human).